The sequence spans 183 residues: Helofensin-1 (183 aa).

A signal peptide spans Met1–Gly26. A C(6)C(4)C(9)C(6)CC 1; approximate repeat occupies Ala27 to Ala64. The C(6)C(4)C(9)C(6)CC 2; approximate repeat unit spans residues Arg65 to Gln101. A C(6)C(4)C(9)C(6)CC 3; approximate repeat occupies Arg102–Lys139. One copy of the C(6)C(4)C(9)C(6)CC 4; approximate repeat lies at Arg140 to Lys177.

It belongs to the beta-defensin family. Helofensin subfamily. As to expression, expressed by the mandibular venom gland.

The protein localises to the secreted. Lethal toxin which possesses an inhibitory effect on direct electrical stimulation of the isolated hemi-diaphragm of mice. Neither hemorrhagic nor hemolytic activities are detected. Phospholipase A2 activity, proteolytic activity and arginine esterolytic activity are absent. The chain is Helofensin-1 from Heloderma suspectum cinctum (Banded Gila monster).